The sequence spans 384 residues: Bifunctional enzyme IspD/IspF (384 aa).

A 2-C-methyl-D-erythritol 4-phosphate cytidylyltransferase region spans residues 1-226; the sequence is MAKTVVLVVA…RCLFDGPGEV (226 aa). The tract at residues 227 to 384 is 2-C-methyl-D-erythritol 2,4-cyclodiphosphate synthase; the sequence is RSASGYDVHR…QAMASVWLPR (158 aa). Positions 233 and 235 each coordinate a divalent metal cation. 4-CDP-2-C-methyl-D-erythritol 2-phosphate-binding positions include 233–235 and 260–261; these read DVH and HS. His268 contacts a divalent metal cation. 4-CDP-2-C-methyl-D-erythritol 2-phosphate contacts are provided by residues 282–284, 358–361, Phe365, and Arg368; these read DIG and TTTE.

This sequence in the N-terminal section; belongs to the IspD/TarI cytidylyltransferase family. IspD subfamily. The protein in the C-terminal section; belongs to the IspF family. Requires a divalent metal cation as cofactor.

It catalyses the reaction 2-C-methyl-D-erythritol 4-phosphate + CTP + H(+) = 4-CDP-2-C-methyl-D-erythritol + diphosphate. The catalysed reaction is 4-CDP-2-C-methyl-D-erythritol 2-phosphate = 2-C-methyl-D-erythritol 2,4-cyclic diphosphate + CMP. It participates in isoprenoid biosynthesis; isopentenyl diphosphate biosynthesis via DXP pathway; isopentenyl diphosphate from 1-deoxy-D-xylulose 5-phosphate: step 2/6. Its pathway is isoprenoid biosynthesis; isopentenyl diphosphate biosynthesis via DXP pathway; isopentenyl diphosphate from 1-deoxy-D-xylulose 5-phosphate: step 4/6. Its function is as follows. Bifunctional enzyme that catalyzes the formation of 4-diphosphocytidyl-2-C-methyl-D-erythritol from CTP and 2-C-methyl-D-erythritol 4-phosphate (MEP) (IspD), and catalyzes the conversion of 4-diphosphocytidyl-2-C-methyl-D-erythritol 2-phosphate (CDP-ME2P) to 2-C-methyl-D-erythritol 2,4-cyclodiphosphate (ME-CPP) with a corresponding release of cytidine 5-monophosphate (CMP) (IspF). The sequence is that of Bifunctional enzyme IspD/IspF from Paramagnetospirillum magneticum (strain ATCC 700264 / AMB-1) (Magnetospirillum magneticum).